Reading from the N-terminus, the 771-residue chain is Sarcolemmal membrane-associated protein (771 aa).

The tract at residues methionine 1–glutamine 163 is necessary for targeting to centrosomes. Residues methionine 1 to proline 745 lie on the Cytoplasmic side of the membrane. In terms of domain architecture, FHA spans isoleucine 28–leucine 85. The residue at position 148 (serine 148) is a Phosphoserine. Coiled-coil stretches lie at residues glutamine 167–threonine 202 and asparagine 230–leucine 381. Positions glutamate 420 to aspartate 429 are enriched in basic and acidic residues. The tract at residues glutamate 420 to methionine 450 is disordered. A phosphoserine mark is found at serine 431 and serine 435. The stretch at glutamate 452–lysine 742 forms a coiled coil. The helical; Anchor for type IV membrane protein transmembrane segment at tryptophan 746–leucine 766 threads the bilayer. The Extracellular segment spans residues alanine 767–proline 771.

Belongs to the SLMAP family. In terms of assembly, homodimer. Interacts with myosin. Interacts with SIKE1 and both associate with the STRIPAK core complex composed of PP2A catalytic and scaffolding subunits, the striatins (PP2A regulatory subunits), the striatin-associated proteins MOB4, STRIP1 and STRIP2, PDCD10 and members of the STE20 kinases, such as STK24 and STK26. Interacts (via FHA domain) with STK3 (when phosphorylated); the interaction associates STK3 with the STRIPAK complex. In terms of tissue distribution, expressed in heart (at protein level). Expressed in heart, skeletal muscle, smooth muscle, kidney, spleen, pancreas and brain.

The protein resides in the cell membrane. It localises to the sarcolemma. The protein localises to the cytoplasm. It is found in the myofibril. Its subcellular location is the sarcomere. The protein resides in the m line. It localises to the z line. The protein localises to the cytoskeleton. It is found in the microtubule organizing center. Its subcellular location is the centrosome. The protein resides in the endoplasmic reticulum membrane. It localises to the mitochondrion membrane. In terms of biological role, associates with the striatin-interacting phosphatase and kinase (STRIPAK) core complex, forming the extended (SIKE1:SLMAP)STRIPAK complex. The (SIKE1:SLMAP)STRIPAK complex dephosphorylates STK3 leading to the inhibition of Hippo signaling and the control of cell growth. May play a role during myoblast fusion. The polypeptide is Sarcolemmal membrane-associated protein (SLMAP) (Oryctolagus cuniculus (Rabbit)).